A 264-amino-acid chain; its full sequence is uncharacterized protein (264 aa).

Transmembrane regions (helical) follow at residues 19–39, 42–62, 69–89, 100–120, 136–156, 160–180, 192–212, and 223–243; these read LFPA…LPFL, YDWL…SGLE, VITL…HMGS, IFGV…YLCQ, FAVV…HFSI, WWLS…YEVN, FILI…FGAW, and LVHL…FLIV.

Its subcellular location is the cell membrane. This is an uncharacterized protein from Bacillus subtilis (strain 168).